We begin with the raw amino-acid sequence, 90 residues long: Acylphosphatase (90 aa).

The Acylphosphatase-like domain occupies Ala-3 to Tyr-90. Active-site residues include Arg-18 and Asn-36.

The protein belongs to the acylphosphatase family.

The enzyme catalyses an acyl phosphate + H2O = a carboxylate + phosphate + H(+). The polypeptide is Acylphosphatase (acyP) (Pediococcus pentosaceus (strain ATCC 25745 / CCUG 21536 / LMG 10740 / 183-1w)).